We begin with the raw amino-acid sequence, 78 residues long: MKEANTRRYIHLCLVVVLVSTIITTEAEDDRLFCIRHHKYCGHRPNRCCSGLFCRCNTFGTNCRCQSKGALGKLISGK.

The signal sequence occupies residues 1–27; sequence MKEANTRRYIHLCLVVVLVSTIITTEA. The propeptide occupies 28–31; that stretch reads EDDR. 4 disulfide bridges follow: cysteine 34-cysteine 49, cysteine 41-cysteine 54, cysteine 48-cysteine 65, and cysteine 56-cysteine 63. At serine 76 the chain carries Serine amide.

Belongs to the xibalbin-13 family. In terms of tissue distribution, expressed by the venom gland.

The protein localises to the secreted. Its function is as follows. Probable neurotoxin. Strongly inhibits voltage-gated potassium channels (Kv1.1/KCNA1, Kv1.2/KCNA2, Kv1.3/KCNA3, and Kv1.6/KCNA6) and mildly inhibits sodium channels (Nav1.2/SCN2A, Nav1.4/SCN4A, Nav1.5/SCN5A, Nav1.6/SCN8A, and BgNav). Induces activation of protein kinase A type II (PKA-II) and MAP kinase Erk1/2 in primary nociceptive and non-nociceptive sensory neurons. Does not show cytotoxic activity. Does not have an impact on Ca2+, cAMP, and NO signaling in the cell types analyzed. Does not interfere with the adhesion of leukocytes to endothelial cells. The sequence is that of Xibalbin-13 1 from Xibalbanus tulumensis (Blind cave remipede).